The primary structure comprises 302 residues: Protoheme IX farnesyltransferase 1 (302 aa).

8 helical membrane passes run 27-47 (VVAL…VTDF), 49-69 (WIQA…AAAF), 98-118 (SVAI…YAWV), 121-141 (LTAW…TMYL), 149-169 (IVIA…AVTG), 175-195 (AWLL…ALAI), 228-248 (LLTL…IYLF), and 281-301 (IYHL…GMVL).

It belongs to the UbiA prenyltransferase family. Protoheme IX farnesyltransferase subfamily.

The protein resides in the cell inner membrane. It catalyses the reaction heme b + (2E,6E)-farnesyl diphosphate + H2O = Fe(II)-heme o + diphosphate. It participates in porphyrin-containing compound metabolism; heme O biosynthesis; heme O from protoheme: step 1/1. In terms of biological role, converts heme B (protoheme IX) to heme O by substitution of the vinyl group on carbon 2 of heme B porphyrin ring with a hydroxyethyl farnesyl side group. The chain is Protoheme IX farnesyltransferase 1 from Vibrio parahaemolyticus serotype O3:K6 (strain RIMD 2210633).